Reading from the N-terminus, the 563-residue chain is Arginine--tRNA ligase (563 aa).

Residues 120-130 carry the 'HIGH' region motif; sequence PNIAKPFHIGH.

The protein belongs to the class-I aminoacyl-tRNA synthetase family. In terms of assembly, monomer.

It is found in the cytoplasm. It catalyses the reaction tRNA(Arg) + L-arginine + ATP = L-arginyl-tRNA(Arg) + AMP + diphosphate. The chain is Arginine--tRNA ligase from Clostridium botulinum (strain Langeland / NCTC 10281 / Type F).